The primary structure comprises 732 residues: uncharacterized protein (732 aa).

Transmembrane regions (helical) follow at residues 687-707 (YLFP…GSDL) and 712-732 (GVKV…YYTS).

It belongs to the FadG family.

Its subcellular location is the cell membrane. This is an uncharacterized protein from Bacillus subtilis (strain 168).